The sequence spans 76 residues: NADH dehydrogenase [ubiquinone] 1 subunit C1, mitochondrial (76 aa).

The transit peptide at 1–27 (MAPSALLRPLSRLLAPARLPSGPSVRS) directs the protein to the mitochondrion. Residues 41-59 (WLKVGFTLGTTVFLWIYLI) form a helical membrane-spanning segment.

It belongs to the complex I NDUFC1 subunit family. As to quaternary structure, complex I is composed of 45 different subunits.

Its subcellular location is the mitochondrion inner membrane. Its function is as follows. Accessory subunit of the mitochondrial membrane respiratory chain NADH dehydrogenase (Complex I), that is believed not to be involved in catalysis. Complex I functions in the transfer of electrons from NADH to the respiratory chain. The immediate electron acceptor for the enzyme is believed to be ubiquinone. This is NADH dehydrogenase [ubiquinone] 1 subunit C1, mitochondrial (NDUFC1) from Homo sapiens (Human).